We begin with the raw amino-acid sequence, 104 residues long: Thioredoxin (104 aa).

In terms of domain architecture, Thioredoxin spans 2-104 (AIVKVTDSDF…NLAEVLDKHL (103 aa)). A disulfide bond links cysteine 29 and cysteine 32.

Belongs to the thioredoxin family.

Its function is as follows. Component of the thioredoxin-thioredoxin reductase system. Participates in various redox reactions through the reversible oxidation of its active center dithiol to a disulfide and catalyzes dithiol-disulfide exchange reactions. The chain is Thioredoxin (trxA) from Staphylococcus epidermidis (strain ATCC 35984 / DSM 28319 / BCRC 17069 / CCUG 31568 / BM 3577 / RP62A).